The following is a 491-amino-acid chain: AP-2 complex subunit mu (491 aa).

3 positions are modified to phosphoserine: S179, S180, and S181. The 282-residue stretch at 209–490 (KDEVFLYVNE…ISKAGSYEVR (282 aa)) folds into the MHD domain.

The protein belongs to the adaptor complexes medium subunit family. Adaptor protein complex 2 (AP-2) is a heterotetramer composed of two large adaptins (alpha-type subunit APL3 and beta-type subunit APL1), a medium chain (mu-type subunit APM4) and a small adaptin (sigma-type subunit APS2).

The protein resides in the membrane. Its subcellular location is the clathrin-coated pit. It is found in the cytoplasmic vesicle. It localises to the clathrin-coated vesicle membrane. Functionally, component of the adaptor complexes which link clathrin to receptors in coated vesicles. Clathrin-associated protein complexes are believed to interact with the cytoplasmic tails of membrane proteins, leading to their selection and concentration. The protein is AP-2 complex subunit mu (APM4) of Saccharomyces cerevisiae (strain ATCC 204508 / S288c) (Baker's yeast).